Here is a 403-residue protein sequence, read N- to C-terminus: Phosphoglycerate kinase (403 aa).

Substrate is bound by residues 21–23 (DFN), arginine 37, 60–63 (HLGR), arginine 125, and arginine 158. ATP is bound by residues lysine 209, glutamate 332, and 359-362 (GGDS).

The protein belongs to the phosphoglycerate kinase family. In terms of assembly, monomer.

It localises to the cytoplasm. It catalyses the reaction (2R)-3-phosphoglycerate + ATP = (2R)-3-phospho-glyceroyl phosphate + ADP. Its pathway is carbohydrate degradation; glycolysis; pyruvate from D-glyceraldehyde 3-phosphate: step 2/5. The sequence is that of Phosphoglycerate kinase from Koribacter versatilis (strain Ellin345).